A 155-amino-acid chain; its full sequence is Ribosome maturation factor RimP (155 aa).

The protein belongs to the RimP family.

It localises to the cytoplasm. Functionally, required for maturation of 30S ribosomal subunits. The sequence is that of Ribosome maturation factor RimP from Prochlorococcus marinus subsp. pastoris (strain CCMP1986 / NIES-2087 / MED4).